Consider the following 294-residue polypeptide: Phosphoprotein (294 aa).

The interval 12–28 (MGNEAAKAAEAFQRSLK) is binding to monomeric RNA-free nucleoprotein. The tract at residues 52–97 (KPTISKSTKVTTPPERRNAWGEKPDTTRNQTEEARNEATLEDTSRL) is disordered. Residues 65–97 (PERRNAWGEKPDTTRNQTEEARNEATLEDTSRL) are compositionally biased toward basic and acidic residues. Ser-106 carries the phosphoserine modification. Residues 123-128 (KKKVTF) are binding to host phosphatase PP1. The tract at residues 135–157 (RYTKLEMEALELLSDNEDDDAES) is binding to protein M2-1. Phosphoserine occurs at positions 148, 157, 158, 168, and 171. The oligomerization and binding to RNA-directed RNA polymerase L stretch occupies residues 169 to 194 (ALSLEARLESIDEKLSMILGLLRTLN). The tract at residues 234 to 294 (MKEEAKQKSK…PDDDLYSLTM (61 aa)) is disordered. A binding to RNA-directed RNA polymerase L region spans residues 251-279 (LTEKAKELNKIVEDESTSGESEEEEEEED). Basic and acidic residues predominate over residues 253–263 (EKAKELNKIVE). Residues 264–294 (DESTSGESEEEEEEEDEEESNPDDDLYSLTM) show a composition bias toward acidic residues. Residues 281 to 294 (EESNPDDDLYSLTM) are binding to the N-RNA complex.

Belongs to the pneumoviridae phosphoprotein P family. In terms of assembly, homotetramer. Interacts with protein M2-1; the interaction between the two tetramers is required for the anti-termination and elongation transcriptional activities of protein M2-1. Interacts with host phosphatase PP1; this interaction recruits PP1 to the inclusion bodies. Formation of a complex PP1/M2-1/P allows P to target host PP1 phosphatase to the M2-1 substrate. Interacts with the nucleoprotein N; the phosphorylated phosphoprotein P binds to N-RNA complex. Interacts with the monomeric RNA-free nucleoprotein N. Interacts with RNA-directed RNA polymerase L (via N-terminus); the association of P and L forms the polymerase complex. Post-translationally, constitutively phosphorylated by host.

The protein resides in the virion. It is found in the host cytoplasm. Plays critical roles in regulating RNA replication and transcription through its interactions with multiple proteins. Tethers the RNA-directed RNA polymerase L to the nucleoprotein-RNA complex. Recruits the M2-1 protein, a processivity factor that is required for efficient transcription of viral RNA. Acts as a chaperone for neo-synthesized nucleoprotein by forming an N-P complex that preserves N in a monomeric and RNA-free state and prevents the association of nascent N with host cell RNAs. Recruits the host phosphatase PP1 to inclusion bodies to regulate viral transcription. The sequence is that of Phosphoprotein from Avian metapneumovirus (isolate Canada goose/Minnesota/15a/2001) (AMPV).